Here is a 200-residue protein sequence, read N- to C-terminus: Adenylyl-sulfate kinase (200 aa).

Residue 36–43 coordinates ATP; the sequence is GLSGSGKS. The active-site Phosphoserine intermediate is serine 110.

The protein belongs to the APS kinase family.

The catalysed reaction is adenosine 5'-phosphosulfate + ATP = 3'-phosphoadenylyl sulfate + ADP + H(+). The protein operates within sulfur metabolism; hydrogen sulfide biosynthesis; sulfite from sulfate: step 2/3. Its function is as follows. Catalyzes the synthesis of activated sulfate. The polypeptide is Adenylyl-sulfate kinase (Clostridium acetobutylicum (strain ATCC 824 / DSM 792 / JCM 1419 / IAM 19013 / LMG 5710 / NBRC 13948 / NRRL B-527 / VKM B-1787 / 2291 / W)).